Here is a 363-residue protein sequence, read N- to C-terminus: Spore germination protein YndE (363 aa).

A run of 10 helical transmembrane segments spans residues 8-28 (ITTA…GVLT), 41-61 (DGWI…MIIA), 84-104 (LGHL…AFEV), 113-133 (FFLL…WIGL), 149-169 (MIFP…LGIF), 189-209 (VKTT…VAFM), 218-238 (AVVI…IMVI), 273-293 (FLLV…FYAA), 305-325 (PLSC…MPKN), and 335-355 (TVSH…LVIS).

It belongs to the amino acid-polyamine-organocation (APC) superfamily. Spore germination protein (SGP) (TC 2.A.3.9) family.

The protein resides in the cell membrane. Its function is as follows. Involved in the germinative response to L-alanine. Could be an amino acid transporter. This is Spore germination protein YndE (yndE) from Bacillus subtilis (strain 168).